A 95-amino-acid chain; its full sequence is Alpha-conotoxin PiXXA (95 aa).

The signal sequence occupies residues 1–24 (MPKLEMMLLVLLILPLPYFDAAGG). A propeptide spanning residues 25 to 45 (QSVHVDGYGDGLARYLQRGER) is cleaved from the precursor. Residue Pro-56 is modified to 4-hydroxyproline. Cystine bridges form between Cys-64/Cys-73, Cys-69/Cys-81, Cys-74/Cys-91, and Cys-79/Cys-93.

The protein belongs to the conotoxin D superfamily. In terms of assembly, homodimer; disulfide-linked. The homodimer contains 10 disulfide bonds. As to expression, expressed by the venom duct.

The protein resides in the secreted. Alpha-conotoxins act on postsynaptic membranes, they bind to the nicotinic acetylcholine receptors (nAChR) and thus inhibit them. Through its two C-terminal domains, this homodimeric protein would bind to two nAChR allosteric sites, located outside the nAChR C-loop of the principal binding face and at the adjacent binding interface in a clockwise direction. This toxin slowly and reversibly inhibits the ACh-induced response of the human alpha-7/CHRNA7 nAChR subtype (IC(50)=6.2 uM). The polypeptide is Alpha-conotoxin PiXXA (Conus princeps (Prince cone)).